Here is a 328-residue protein sequence, read N- to C-terminus: uncharacterized protein (328 aa).

Residues 1–24 (MKSIKGLGKLLLASSILFSSSAFA) form the signal peptide.

The protein belongs to the bacterial solute-binding protein 7 family.

It localises to the periplasm. This is an uncharacterized protein from Haemophilus influenzae (strain ATCC 51907 / DSM 11121 / KW20 / Rd).